The primary structure comprises 225 residues: Two-component response regulator PhoP (225 aa).

The Response regulatory domain maps to 2–116; the sequence is KLLVVEDEAL…ELEARLNALL (115 aa). Position 51 is a 4-aspartylphosphate (Asp-51). The segment at residues 124–222 is a DNA-binding region (ompR/PhoB-type); that stretch reads QSTIEAGPLV…VRGQGYLFTE (99 aa).

Functionally, member of the two-component regulatory system PhoP/PhoQ that plays a role in the regulation of resistance towards polymyxin B and cationic antimicrobial peptides in response to limiting concentrations of Mg(2+). Functions as a transcriptional activator by direct binding to a cis-acting sequence upstream of the target gene promoters including oprH and pmrH promoters. The protein is Two-component response regulator PhoP (phoP) of Pseudomonas aeruginosa (strain ATCC 15692 / DSM 22644 / CIP 104116 / JCM 14847 / LMG 12228 / 1C / PRS 101 / PAO1).